Reading from the N-terminus, the 428-residue chain is L-fucose-proton symporter (428 aa).

12 helical membrane-spanning segments follow: residues 10-30 (FIVP…ANDI), 51-71 (LVQL…ALFA), 78-98 (AGIL…WPAA), 100-120 (YEIF…LAFL), 147-167 (FNPL…LTNL), 204-224 (IALG…KMPA), 250-270 (EGVI…TFIV), 288-308 (IIAM…MKYL), 311-331 (EFML…VIFI), 339-359 (CLIL…GIAL), 371-391 (AGLV…GMII), and 401-421 (AVNF…IYGF).

Belongs to the major facilitator superfamily. FHS transporter (TC 2.A.1.7) family.

It localises to the cell inner membrane. It carries out the reaction L-fucose(in) + H(+)(in) = L-fucose(out) + H(+)(out). Its function is as follows. Mediates the uptake of L-fucose across the boundary membrane with the concomitant transport of protons into the cell (symport system). This Haemophilus influenzae (strain ATCC 51907 / DSM 11121 / KW20 / Rd) protein is L-fucose-proton symporter (fucP).